Reading from the N-terminus, the 398-residue chain is Cell division protein FtsZ (398 aa).

Residues 21–25 (GGGGN), 108–110 (GTG), Glu-139, Arg-143, and Asp-187 contribute to the GTP site.

Belongs to the FtsZ family. In terms of assembly, homodimer. Polymerizes to form a dynamic ring structure in a strictly GTP-dependent manner. Interacts directly with several other division proteins.

It is found in the cytoplasm. Functionally, essential cell division protein that forms a contractile ring structure (Z ring) at the future cell division site. The regulation of the ring assembly controls the timing and the location of cell division. One of the functions of the FtsZ ring is to recruit other cell division proteins to the septum to produce a new cell wall between the dividing cells. Binds GTP and shows GTPase activity. This chain is Cell division protein FtsZ, found in Pseudomonas putida (strain ATCC 47054 / DSM 6125 / CFBP 8728 / NCIMB 11950 / KT2440).